The sequence spans 231 residues: NADH-ubiquinone oxidoreductase chain 4 (231 aa).

Helical transmembrane passes span Pro-1–Ile-21, Leu-34–Leu-54, Ser-61–Ile-80, Trp-84–Leu-106, Val-118–Leu-138, and Leu-156–Leu-178.

The protein belongs to the complex I subunit 4 family.

Its subcellular location is the mitochondrion membrane. It catalyses the reaction a ubiquinone + NADH + 5 H(+)(in) = a ubiquinol + NAD(+) + 4 H(+)(out). Functionally, core subunit of the mitochondrial membrane respiratory chain NADH dehydrogenase (Complex I) that is believed to belong to the minimal assembly required for catalysis. Complex I functions in the transfer of electrons from NADH to the respiratory chain. The immediate electron acceptor for the enzyme is believed to be ubiquinone. The polypeptide is NADH-ubiquinone oxidoreductase chain 4 (MT-ND4) (Azemiops feae (Fea's viper)).